We begin with the raw amino-acid sequence, 545 residues long: Chaperonin GroEL (545 aa).

ATP contacts are provided by residues 29 to 32, Lys-50, 86 to 90, Gly-414, 477 to 479, and Asp-493; these read TMGP, DGTTT, and NAA.

The protein belongs to the chaperonin (HSP60) family. In terms of assembly, forms a cylinder of 14 subunits composed of two heptameric rings stacked back-to-back. Interacts with the co-chaperonin GroES.

It is found in the cytoplasm. The catalysed reaction is ATP + H2O + a folded polypeptide = ADP + phosphate + an unfolded polypeptide.. In terms of biological role, together with its co-chaperonin GroES, plays an essential role in assisting protein folding. The GroEL-GroES system forms a nano-cage that allows encapsulation of the non-native substrate proteins and provides a physical environment optimized to promote and accelerate protein folding. The protein is Chaperonin GroEL of Campylobacter fetus subsp. fetus (strain 82-40).